The following is a 248-amino-acid chain: MPTYKAVIAYDGSVFSGFALQKDKRLKSVLGTLKEGFARVGIKSDIIGAGRTDKGVHATGQVICFQSAHFLDSQVQAIESLRFLLNAKLYPHIMVRSLHIVDDTFHPRFDALWRSYRFLLSPTQPSPFAAPYVSYEKIGDETLFKNALQAFQGQHNFVFFKKNGSYTKNCIRTIFAIKHYTYKGLDIVYVRGNGFLRAQVRLMVGAALAYSRAELSFHSLQEQINGQKQHYTYPISPNGLYLCEVGYR.

Catalysis depends on D53, which acts as the Nucleophile. Substrate is bound at residue Y116.

This sequence belongs to the tRNA pseudouridine synthase TruA family. Homodimer.

It catalyses the reaction uridine(38/39/40) in tRNA = pseudouridine(38/39/40) in tRNA. Formation of pseudouridine at positions 38, 39 and 40 in the anticodon stem and loop of transfer RNAs. In Helicobacter hepaticus (strain ATCC 51449 / 3B1), this protein is tRNA pseudouridine synthase A.